The primary structure comprises 354 residues: 5,10-methenyltetrahydromethanopterin hydrogenase (354 aa).

It belongs to the HMD family.

The enzyme catalyses 5,10-methenyl-5,6,7,8-tetrahydromethanopterin + H2 = 5,10-methylenetetrahydromethanopterin + H(+). It participates in one-carbon metabolism; methanogenesis from CO(2); 5,10-methylene-5,6,7,8-tetrahydromethanopterin from 5,10-methenyl-5,6,7,8-tetrahydromethanopterin (hydrogen route): step 1/1. Catalyzes the reversible reduction of methenyl-H(4)MPT(+) to methylene-H(4)MPT. This is 5,10-methenyltetrahydromethanopterin hydrogenase from Methanococcus vannielii (strain ATCC 35089 / DSM 1224 / JCM 13029 / OCM 148 / SB).